A 117-amino-acid polypeptide reads, in one-letter code: UPF0102 protein Spro_4337 (117 aa).

This sequence belongs to the UPF0102 family.

The chain is UPF0102 protein Spro_4337 from Serratia proteamaculans (strain 568).